A 90-amino-acid chain; its full sequence is Probable Fe(2+)-trafficking protein (90 aa).

It belongs to the Fe(2+)-trafficking protein family.

Could be a mediator in iron transactions between iron acquisition and iron-requiring processes, such as synthesis and/or repair of Fe-S clusters in biosynthetic enzymes. This is Probable Fe(2+)-trafficking protein from Polynucleobacter asymbioticus (strain DSM 18221 / CIP 109841 / QLW-P1DMWA-1) (Polynucleobacter necessarius subsp. asymbioticus).